We begin with the raw amino-acid sequence, 215 residues long: Phosphatidylserine decarboxylase proenzyme (215 aa).

The active-site Schiff-base intermediate with substrate; via pyruvic acid is Ser184. Residue Ser184 is modified to Pyruvic acid (Ser); by autocatalysis.

It belongs to the phosphatidylserine decarboxylase family. PSD-A subfamily. As to quaternary structure, heterodimer of a large membrane-associated beta subunit and a small pyruvoyl-containing alpha subunit. Pyruvate is required as a cofactor. In terms of processing, is synthesized initially as an inactive proenzyme. Formation of the active enzyme involves a self-maturation process in which the active site pyruvoyl group is generated from an internal serine residue via an autocatalytic post-translational modification. Two non-identical subunits are generated from the proenzyme in this reaction, and the pyruvate is formed at the N-terminus of the alpha chain, which is derived from the carboxyl end of the proenzyme. The post-translation cleavage follows an unusual pathway, termed non-hydrolytic serinolysis, in which the side chain hydroxyl group of the serine supplies its oxygen atom to form the C-terminus of the beta chain, while the remainder of the serine residue undergoes an oxidative deamination to produce ammonia and the pyruvoyl prosthetic group on the alpha chain.

Its subcellular location is the cell membrane. It carries out the reaction a 1,2-diacyl-sn-glycero-3-phospho-L-serine + H(+) = a 1,2-diacyl-sn-glycero-3-phosphoethanolamine + CO2. It functions in the pathway phospholipid metabolism; phosphatidylethanolamine biosynthesis; phosphatidylethanolamine from CDP-diacylglycerol: step 2/2. Functionally, catalyzes the formation of phosphatidylethanolamine (PtdEtn) from phosphatidylserine (PtdSer). This chain is Phosphatidylserine decarboxylase proenzyme, found in Aromatoleum aromaticum (strain DSM 19018 / LMG 30748 / EbN1) (Azoarcus sp. (strain EbN1)).